The following is a 273-amino-acid chain: Large ribosomal subunit protein uL2 (273 aa).

Residues 221–273 (RGTAMNPVDHPHGGGEGRNFGKHPVTPWGVQTKGKKTRHNKRTDKFIVRRRGK) form a disordered region. Positions 253 to 273 (KGKKTRHNKRTDKFIVRRRGK) are enriched in basic residues.

This sequence belongs to the universal ribosomal protein uL2 family. As to quaternary structure, part of the 50S ribosomal subunit. Forms a bridge to the 30S subunit in the 70S ribosome.

In terms of biological role, one of the primary rRNA binding proteins. Required for association of the 30S and 50S subunits to form the 70S ribosome, for tRNA binding and peptide bond formation. It has been suggested to have peptidyltransferase activity; this is somewhat controversial. Makes several contacts with the 16S rRNA in the 70S ribosome. The chain is Large ribosomal subunit protein uL2 from Glaesserella parasuis serovar 5 (strain SH0165) (Haemophilus parasuis).